We begin with the raw amino-acid sequence, 709 residues long: MERSPFLLACILLPLVRGHSLFTCEPITVPRCMKMTYNMTFFPNLMGHYDQGIAAVEMGHFLHLANLECSPNIEMFLCQAFIPTCTEQIHVVLPCRKLCEKIVSDCKKLMDTFGIRWPEELECNRLPHCDDTVPVTSHPHTELSGPQKKSDQVPRDIGFWCPKHLRTSGDQGYRFLGIEQCAPPCPNMYFKSDELDFAKSFIGIVSIFCLCATLFTFLTFLIDVRRFRYPERPIIYYSVCYSIVSLMYFVGFLLGNSTACNKADEKLELGDTVVLGSKNKACSVVFMFLYFFTMAGTVWWVILTITWFLAAGRKWSCEAIEQKAVWFHAVAWGAPGFLTVMLLAMNKVEGDNISGVCFVGLYDLDASRYFVLLPLCLCVFVGLSLLLAGIISLNHVRQVIQHDGRNQEKLKKFMIRIGVFSGLYLVPLVTLLGCYVYELVNRITWEMTWFSDHCHQYRIPCPYQANPKARPELALFMIKYLMTLIVGISAVFWVGSKKTCTEWAGFFKRNRKRDPISESRRVLQESCEFFLKHNSKVKHKKKHGAPGPHRLKVISKSMGTSTGATTNHGTSAMAIADHDYLGQETSTEVHTSPEASVKEGRADRANTPSAKDRDCGESAGPSSKLSGNRNGRESRAGGLKERSNGSEGAPSEGRVSPKSSVPETGLIDCSTSQAASSPEPTSLKGSTSLPVHSASRARKEQGAGSHSDA.

The first 18 residues, 1 to 18 (MERSPFLLACILLPLVRG), serve as a signal peptide directing secretion. The FZ domain maps to 19–132 (HSLFTCEPIT…CNRLPHCDDT (114 aa)). The Extracellular segment spans residues 19 to 201 (HSLFTCEPIT…SDELDFAKSF (183 aa)). Cystine bridges form between Cys-24–Cys-85, Cys-32–Cys-78, Cys-69–Cys-106, Cys-95–Cys-129, and Cys-99–Cys-123. An N-linked (GlcNAc...) asparagine glycan is attached at Asn-38. A helical transmembrane segment spans residues 202-222 (IGIVSIFCLCATLFTFLTFLI). Over 223–233 (DVRRFRYPERP) the chain is Cytoplasmic. The chain crosses the membrane as a helical span at residues 234–254 (IIYYSVCYSIVSLMYFVGFLL). At 255 to 284 (GNSTACNKADEKLELGDTVVLGSKNKACSV) the chain is on the extracellular side. Asn-256 carries an N-linked (GlcNAc...) asparagine glycan. The helical transmembrane segment at 285 to 305 (VFMFLYFFTMAGTVWWVILTI) threads the bilayer. Topologically, residues 306–324 (TWFLAAGRKWSCEAIEQKA) are cytoplasmic. Residues 325–345 (VWFHAVAWGAPGFLTVMLLAM) form a helical membrane-spanning segment. The Extracellular segment spans residues 346–370 (NKVEGDNISGVCFVGLYDLDASRYF). N-linked (GlcNAc...) asparagine glycosylation occurs at Asn-352. A helical membrane pass occupies residues 371–391 (VLLPLCLCVFVGLSLLLAGII). Residues 392 to 416 (SLNHVRQVIQHDGRNQEKLKKFMIR) lie on the Cytoplasmic side of the membrane. Residues 417–437 (IGVFSGLYLVPLVTLLGCYVY) traverse the membrane as a helical segment. The Extracellular portion of the chain corresponds to 438-473 (ELVNRITWEMTWFSDHCHQYRIPCPYQANPKARPEL). Residues 474–494 (ALFMIKYLMTLIVGISAVFWV) traverse the membrane as a helical segment. At 495 to 709 (GSKKTCTEWA…EQGAGSHSDA (215 aa)) the chain is on the cytoplasmic side. A Lys-Thr-X-X-X-Trp motif, mediates interaction with the PDZ domain of Dvl family members motif is present at residues 498-503 (KTCTEW). A compositionally biased stretch (polar residues) spans 583-594 (QETSTEVHTSPE). The disordered stretch occupies residues 583–709 (QETSTEVHTS…EQGAGSHSDA (127 aa)). Residues 596–616 (SVKEGRADRANTPSAKDRDCG) are compositionally biased toward basic and acidic residues. Residues 620 to 629 (GPSSKLSGNR) are compositionally biased toward polar residues. Residues 630–644 (NGRESRAGGLKERSN) are compositionally biased toward basic and acidic residues. Ser-656 is subject to Phosphoserine. A compositionally biased stretch (polar residues) spans 669–690 (CSTSQAASSPEPTSLKGSTSLP). Residues 697 to 709 (ARKEQGAGSHSDA) show a composition bias toward basic and acidic residues.

The protein belongs to the G-protein coupled receptor Fz/Smo family. In terms of assembly, interacts with LMBR1L. Post-translationally, ubiquitinated by ZNRF3, leading to its degradation by the proteasome. As to expression, expressed in both hair cells and supporting cells in the utricle, saccule, cristae and the organ of Corti in the inner ear (at protein level).

The protein localises to the membrane. The protein resides in the cell membrane. Its subcellular location is the cell surface. It is found in the apical cell membrane. It localises to the cytoplasmic vesicle membrane. The protein localises to the endoplasmic reticulum membrane. Functionally, receptor for Wnt proteins. Most of frizzled receptors are coupled to the beta-catenin canonical signaling pathway, which leads to the activation of disheveled proteins, inhibition of GSK-3 kinase, nuclear accumulation of beta-catenin and activation of Wnt target genes. A second signaling pathway involving PKC and calcium fluxes has been seen for some family members, but it is not yet clear if it represents a distinct pathway or if it can be integrated in the canonical pathway, as PKC seems to be required for Wnt-mediated inactivation of GSK-3 kinase. Both pathways seem to involve interactions with G-proteins. Activation by Wnt5A stimulates PKC activity via a G-protein-dependent mechanism. Involved in transduction and intercellular transmission of polarity information during tissue morphogenesis and/or in differentiated tissues. Together with FZD3, is involved in the neural tube closure and plays a role in the regulation of the establishment of planar cell polarity (PCP), particularly in the orientation of asymmetric bundles of stereocilia on the apical faces of a subset of auditory and vestibular sensory cells located in the inner ear. The protein is Frizzled-6 (Fzd6) of Mus musculus (Mouse).